The primary structure comprises 555 residues: MESTPFSGVANQIHTLCERPTYGEVKDGALDVKRQHKCPGPTSGPSPGTNLSGCIRMNDDPSMEENGVERVCPESLLQSREYSSLPLPRHTSSTDGTITSSDPGLEILNMASCDLDRNSLCKKEEDTRSASPTIEAQGTSPAHDNIAFQDSTSKDKTILNLEAKEEPETIEEHKKEHASGDSVVSPLPVTTVKSVNLRQSENTSANEKEVEAEFLRLSLGFKCDWFTLEKRVKLEERSRDLAEENLKKEITNCLKLLESLTPLCEDDNQAQEIIKKLEKSIKFLSQCAARVASRAEMLGAINQESRVSKAVEVMIQHVENLKRMYAKEHAELEELKQVLLQNERSFNPLEDDDDCQIKKRSASLNSKPSSLRRVTIASLPRNIGNAGMVAGMENNDRFSRRSSSWRILGSKQSEHRPSLPRFISTYSWADAEEEKCELKTKDDSEPSGEETVERTRKPSLSEKKNNPSKWDVSSVYDTIASWATNLKSSIRKANKALWLSIAFIVLFAALMSFLTGQLFQKSVDAAPTQQEDSWTSLEHILWPFTRLRHNGPPPV.

The Cytoplasmic segment spans residues 1–495 (MESTPFSGVA…LKSSIRKANK (495 aa)). Disordered regions lie at residues 84–103 (SLPL…SSDP) and 128–147 (RSAS…DNIA). Thr91 is subject to Phosphothreonine. Low complexity predominate over residues 91 to 102 (TSSTDGTITSSD). A compositionally biased stretch (polar residues) spans 129–142 (SASPTIEAQGTSPA). Positions 227–341 (TLEKRVKLEE…LEELKQVLLQ (115 aa)) form a coiled coil. A phosphoserine mark is found at Ser363, Ser370, and Ser424. Residues 437 to 469 (ELKTKDDSEPSGEETVERTRKPSLSEKKNNPSK) are disordered. The span at 451-465 (TVERTRKPSLSEKKN) shows a compositional bias: basic and acidic residues. Residues 496–516 (ALWLSIAFIVLFAALMSFLTG) traverse the membrane as a helical; Anchor for type IV membrane protein segment. The Lumenal portion of the chain corresponds to 517–555 (QLFQKSVDAAPTQQEDSWTSLEHILWPFTRLRHNGPPPV).

It belongs to the IRAG2 family. Interacts (via coiled-coil domain) with ITPR3. Interacts with SUN1 and SUN2. Interacts with microtubules. Interacts with HCN4; regulates HCN4 channel activity. In terms of processing, the removal of the C-terminal lumenal domain occurs by proteolytic processing. In terms of tissue distribution, expressed at high levels in pre B-cells, mature B-cells and pre T-cells. Expressed at low levels in mature T-cells and plasma B-cells. Expressed in germinal center B-cells, splenic marginal zone cells and B-cell lymphomas. Expressed in neuronal cells in the cerebral cortex, epithelial cells in tonsil, adrenal glands, zymogen-producing cells in the stomach and epithelial cells in seminal vesicles.

Its subcellular location is the cytoplasm. It localises to the endoplasmic reticulum membrane. The protein localises to the nucleus envelope. The protein resides in the cytoskeleton. It is found in the microtubule organizing center. Its subcellular location is the centrosome. It localises to the spindle pole. The protein localises to the chromosome. Plays a role in the delivery of peptides to major histocompatibility complex (MHC) class I molecules; this occurs in a transporter associated with antigen processing (TAP)-independent manner. May play a role in taste signal transduction via ITPR3. May play a role during fertilization in pronucleus congression and fusion. Plays a role in maintaining nuclear shape, maybe as a component of the LINC complex and through interaction with microtubules. Plays a role in the regulation of cellular excitability by regulating the hyperpolarization-activated cyclic nucleotide-gated HCN4 channel activity. This Homo sapiens (Human) protein is Inositol 1,4,5-triphosphate receptor associated 2.